A 470-amino-acid chain; its full sequence is MEFAAENEGKSGGGLHSVAEGVRLSPEPGREGVRDLAGAEEFGGGEEGTGLTGIKEIGDGEEGSGQRPEEIPMDLTVVKQEIIDWPGTEGRLAGQWVEQEVEDRPEVKDENAGVLEVKQETDSSLVVKEAKVGEPEVKEEKVKEEVMDWSEVKEEKDNLEIKQEEKFVGQCIKEELMHGECVKEEKDFLKKEIVDDTKVKEEPPINHPVGCKRKLAMSRCETCGTEEAKYRCPRCMRYSCSLPCVKKHKAELTCNGVRDKTAYISIQQFTEMNLLSDYRFLEDVARTADHISRDAFLKRPISNKYMYFMKNRARRQGINLKLLPNGFTKRKENSTFFDKKKQQFCWHVKLQFPQSQAEYIEKRVPDDKTINEILKPYIDPEKSDPVIRQRLKAYIRSQTGVQILMKIEYMQQNLVRYYELDPYKSLLDNLRNKVIIEYPTLHVVLKGSNNDMKVLHQVKSESTKNVGNEN.

The segment at 1–70 (MEFAAENEGK…EEGSGQRPEE (70 aa)) is disordered. Residue S25 is modified to Phosphoserine. Residues 41 to 51 (EFGGGEEGTGL) show a composition bias toward gly residues. Residues K79, K108, K118, K138, K143, K153, K162, K173, K183, and K200 each participate in a glycyl lysine isopeptide (Lys-Gly) (interchain with G-Cter in SUMO2) cross-link. Residues C220, C223, C232, C235, C240, C244, H248, and C254 each contribute to the Zn(2+) site. The HIT-type zinc-finger motif lies at 220 to 254 (CETCGTEEAKYRCPRCMRYSCSLPCVKKHKAELTC). Residue K459 forms a Glycyl lysine isopeptide (Lys-Gly) (interchain with G-Cter in SUMO2) linkage.

This sequence belongs to the BCD1 family. As to quaternary structure, interacts with FBL, SNU13, NOP58, NUFIP1, RUVBL1, RUVBL2 and TAF9. Interacts (via HIT-type zinc finger) with the RUVBL1/RUVBL2 complex in the presence of ADP.

Required for box C/D snoRNAs accumulation involved in snoRNA processing, snoRNA transport to the nucleolus and ribosome biogenesis. In Homo sapiens (Human), this protein is Box C/D snoRNA protein 1 (ZNHIT6).